The following is a 106-amino-acid chain: Nucleoid-associated protein Exig_0019 (106 aa).

Residues 1–16 (MRGMGNMNNMMKQMQK) are compositionally biased toward low complexity. Positions 1 to 23 (MRGMGNMNNMMKQMQKMQKDMAK) are disordered.

Belongs to the YbaB/EbfC family. In terms of assembly, homodimer.

Its subcellular location is the cytoplasm. It localises to the nucleoid. Functionally, binds to DNA and alters its conformation. May be involved in regulation of gene expression, nucleoid organization and DNA protection. This Exiguobacterium sibiricum (strain DSM 17290 / CCUG 55495 / CIP 109462 / JCM 13490 / 255-15) protein is Nucleoid-associated protein Exig_0019.